The primary structure comprises 432 residues: Peptidyl-prolyl cis-trans isomerase cyp6 (432 aa).

One can recognise a PPIase cyclophilin-type domain in the interval 1–168 (MSVLIETTVG…RDIRIKHTII (168 aa)). Serine 206 carries the post-translational modification Phosphoserine. One can recognise an RRM domain in the interval 244 to 322 (NVLFVCKLNP…SRIHVDFSQS (79 aa)). The tract at residues 330 to 432 (YNSNRDRKRS…DRRYRDDRYR (103 aa)) is disordered. Basic and acidic residues-rich tracts occupy residues 341–366 (SRSD…DDYR), 373–395 (DHRD…DDRS), and 406–432 (NCDD…DRYR).

Belongs to the cyclophilin-type PPIase family. PPIL4 subfamily.

It is found in the nucleus. The catalysed reaction is [protein]-peptidylproline (omega=180) = [protein]-peptidylproline (omega=0). Its function is as follows. PPIases accelerate the folding of proteins. It catalyzes the cis-trans isomerization of proline imidic peptide bonds in oligopeptides. This chain is Peptidyl-prolyl cis-trans isomerase cyp6 (cyp6), found in Schizosaccharomyces pombe (strain 972 / ATCC 24843) (Fission yeast).